The sequence spans 586 residues: MPLPYVGMALRRLAWAVASCRLAPWTRGASGPLHSAPAARSDCSAPVFIRAPAFGDRLALIDQHGRHTYKDLYLRSLRLSREICQLRACADGDLREERVSLLCSNDVSFVVAQWAAWMSGGVAVPLYRKHPRAQLEYFIQDSRSSVVLAGPEHVELLSPVAQKLGVPLLPLPPTVYHGVAEDPEEGLVLERNWRDRGAMIIYTSGTTGRPKGVLSTHDNIRAVVTGLVHKWAWTKDDVILHVLPLHHVHGVVNKLLCPLWVGATCVMLPEFSAQLVWEKFLSSEAPQINVFMAVPTIYSKLMDYYDKHFTQPHVQDFVRAVCEEKIRLMVSGSAALPLPVLEKWKGITGHTLLERYGMTEIGMALSNPLTAARLPGSVGTPLPGVEVRIVSENPQKDSSPYLIHAEGSEENTKVTPGFEEKEGELLVRGPSVFREYWDKPEETKAAFTSDGWFKTGDTVVFKDGCYWIRGRTSVDIIKSGGYKVSALEVERLLLAHPSITDVAVIGVPDMTWGQRVTAVVTLQEGHSLSHRELKEWARGVLAPYAVPSELLLVEEIPRNQMGKVNKRDLVRQLYPHEKGAPEAGSQ.

Residues 1 to 89 constitute a mitochondrion transit peptide; that stretch reads MPLPYVGMAL…SREICQLRAC (89 aa). ATP contacts are provided by residues 203 to 211, Asp457, Arg471, and Lys563; that span reads TSGTTGRPK.

The protein belongs to the ATP-dependent AMP-binding enzyme family.

The protein resides in the mitochondrion. It carries out the reaction tetracosanoate + ATP + CoA = tetracosanoyl-CoA + AMP + diphosphate. It catalyses the reaction malonate + ATP + CoA = malonyl-CoA + AMP + diphosphate. Its function is as follows. Catalyzes the initial reaction in intramitochondrial fatty acid synthesis, by activating malonate and methylmalonate, but not acetate, into their respective CoA thioester. May have some preference toward very-long-chain substrates. The polypeptide is Malonate--CoA ligase ACSF3, mitochondrial (Bos taurus (Bovine)).